The sequence spans 1465 residues: DNA polymerase III polC-type (1465 aa).

Residues 427 to 583 form the Exonuclease domain; it reads YVVFDVETTG…YDAEATGRLL (157 aa).

Belongs to the DNA polymerase type-C family. PolC subfamily.

It is found in the cytoplasm. It carries out the reaction DNA(n) + a 2'-deoxyribonucleoside 5'-triphosphate = DNA(n+1) + diphosphate. Required for replicative DNA synthesis. This DNA polymerase also exhibits 3' to 5' exonuclease activity. The protein is DNA polymerase III polC-type of Streptococcus pyogenes serotype M3 (strain ATCC BAA-595 / MGAS315).